We begin with the raw amino-acid sequence, 116 residues long: NADPH-dependent 7-cyano-7-deazaguanine reductase (116 aa).

Cys31 functions as the Thioimide intermediate in the catalytic mechanism. Asp38 (proton donor) is an active-site residue. Substrate is bound by residues 53-55 (VEL) and 72-73 (YE).

This sequence belongs to the GTP cyclohydrolase I family. QueF type 1 subfamily.

The protein resides in the cytoplasm. The enzyme catalyses 7-aminomethyl-7-carbaguanine + 2 NADP(+) = 7-cyano-7-deazaguanine + 2 NADPH + 3 H(+). It functions in the pathway tRNA modification; tRNA-queuosine biosynthesis. Its function is as follows. Catalyzes the NADPH-dependent reduction of 7-cyano-7-deazaguanine (preQ0) to 7-aminomethyl-7-deazaguanine (preQ1). This chain is NADPH-dependent 7-cyano-7-deazaguanine reductase, found in Chlorobium phaeovibrioides (strain DSM 265 / 1930) (Prosthecochloris vibrioformis (strain DSM 265)).